The sequence spans 86 residues: Anti-adapter protein IraP (86 aa).

Residues Met-1–Met-36 adopt a coiled-coil conformation.

The protein belongs to the IraP family. In terms of assembly, interacts with RssB.

The protein localises to the cytoplasm. Inhibits RpoS proteolysis by regulating RssB activity, thereby increasing the stability of the sigma stress factor RpoS especially during phosphate starvation, but also in stationary phase and during nitrogen starvation. Its effect on RpoS stability is due to its interaction with RssB, which probably blocks the interaction of RssB with RpoS, and the consequent delivery of the RssB-RpoS complex to the ClpXP protein degradation pathway. This is Anti-adapter protein IraP from Citrobacter koseri (strain ATCC BAA-895 / CDC 4225-83 / SGSC4696).